A 320-amino-acid chain; its full sequence is Lipoyl synthase (320 aa).

Over residues 1-24 the composition is skewed to basic and acidic residues; that stretch reads MIGKLVRDLKIPDQRHPEKAHRPD. The disordered stretch occupies residues 1–30; it reads MIGKLVRDLKIPDQRHPEKAHRPDNVQPKK. Positions 60, 65, 71, 86, 90, 93, and 300 each coordinate [4Fe-4S] cluster. A Radical SAM core domain is found at 72–289; the sequence is WSQGHATMMI…EKAAYGKGFL (218 aa).

The protein belongs to the radical SAM superfamily. Lipoyl synthase family. [4Fe-4S] cluster is required as a cofactor.

It localises to the cytoplasm. It carries out the reaction [[Fe-S] cluster scaffold protein carrying a second [4Fe-4S](2+) cluster] + N(6)-octanoyl-L-lysyl-[protein] + 2 oxidized [2Fe-2S]-[ferredoxin] + 2 S-adenosyl-L-methionine + 4 H(+) = [[Fe-S] cluster scaffold protein] + N(6)-[(R)-dihydrolipoyl]-L-lysyl-[protein] + 4 Fe(3+) + 2 hydrogen sulfide + 2 5'-deoxyadenosine + 2 L-methionine + 2 reduced [2Fe-2S]-[ferredoxin]. It participates in protein modification; protein lipoylation via endogenous pathway; protein N(6)-(lipoyl)lysine from octanoyl-[acyl-carrier-protein]: step 2/2. Its function is as follows. Catalyzes the radical-mediated insertion of two sulfur atoms into the C-6 and C-8 positions of the octanoyl moiety bound to the lipoyl domains of lipoate-dependent enzymes, thereby converting the octanoylated domains into lipoylated derivatives. This Cereibacter sphaeroides (strain ATCC 17029 / ATH 2.4.9) (Rhodobacter sphaeroides) protein is Lipoyl synthase.